The following is an 870-amino-acid chain: Leucine--tRNA ligase (870 aa).

A 'HIGH' region motif is present at residues 42–52; the sequence is PYPSGKLHMGH. The 'KMSKS' region signature appears at 629–633; it reads KMSKS. Lysine 632 contributes to the ATP binding site.

The protein belongs to the class-I aminoacyl-tRNA synthetase family.

Its subcellular location is the cytoplasm. It catalyses the reaction tRNA(Leu) + L-leucine + ATP = L-leucyl-tRNA(Leu) + AMP + diphosphate. The protein is Leucine--tRNA ligase of Ectopseudomonas mendocina (strain ymp) (Pseudomonas mendocina).